The sequence spans 312 residues: Very-long-chain 3-oxoacyl-CoA reductase (312 aa).

The helical transmembrane segment at 4 to 24 threads the bilayer; that stretch reads ALPAAGFLYWVGAGTVAYLAL. 50–79 provides a ligand contact to NADP(+); sequence GEWAVVTGGTDGIGKSYAEELAKRGMKVVL. Helical transmembrane passes span 182–202 and 271–291; these read GAILNISSGSGMFPVPLLTIY and GYLIHVLMGWIISNLPSWIYL. A substrate-binding site is contributed by S189. Y202 acts as the Proton acceptor in catalysis. The Di-lysine motif signature appears at 308–312; sequence KIKKN.

It belongs to the short-chain dehydrogenases/reductases (SDR) family. 17-beta-HSD 3 subfamily.

The protein resides in the endoplasmic reticulum membrane. The catalysed reaction is a very-long-chain (3R)-3-hydroxyacyl-CoA + NADP(+) = a very-long-chain 3-oxoacyl-CoA + NADPH + H(+). It catalyses the reaction 17beta-estradiol + NAD(+) = estrone + NADH + H(+). It carries out the reaction 17beta-estradiol + NADP(+) = estrone + NADPH + H(+). The enzyme catalyses 3-oxooctadecanoyl-CoA + NADPH + H(+) = (3R)-hydroxyoctadecanoyl-CoA + NADP(+). The catalysed reaction is (7Z,10Z,13Z,16Z)-3-oxodocosatetraenoyl-CoA + NADPH + H(+) = (3R)-hydroxy-(7Z,10Z,13Z,16Z)-docosatetraenoyl-CoA + NADP(+). It catalyses the reaction 3-oxo-(7Z,10Z,13Z,16Z,19Z)-docosapentaenoyl-CoA + NADPH + H(+) = (3R)-hydroxy-(7Z,10Z,13Z,16Z,19Z)-docosapentaenoyl-CoA + NADP(+). It carries out the reaction (8Z,11Z,14Z)-3-oxoeicosatrienoyl-CoA + NADPH + H(+) = (3R)-hydroxy-(8Z,11Z,14Z)-eicosatrienoyl-CoA + NADP(+). It participates in lipid metabolism; fatty acid biosynthesis. The protein operates within steroid biosynthesis; estrogen biosynthesis. Catalyzes the second of the four reactions of the long-chain fatty acids elongation cycle. This endoplasmic reticulum-bound enzymatic process, allows the addition of two carbons to the chain of long- and very long-chain fatty acids/VLCFAs per cycle. This enzyme has a 3-ketoacyl-CoA reductase activity, reducing 3-ketoacyl-CoA to 3-hydroxyacyl-CoA, within each cycle of fatty acid elongation. Thereby, it may participate in the production of VLCFAs of different chain lengths that are involved in multiple biological processes as precursors of membrane lipids and lipid mediators. May also catalyze the transformation of estrone (E1) into estradiol (E2) and play a role in estrogen formation. The protein is Very-long-chain 3-oxoacyl-CoA reductase (HSD17B12) of Macaca fascicularis (Crab-eating macaque).